The primary structure comprises 253 residues: Retinoic acid early-inducible protein 1-gamma (253 aa).

A signal peptide spans 1–28 (MAKAAVTKRHHFMIQKLLILLSYGYTNG). The cysteines at positions 37 and 56 are disulfide-linked. N-linked (GlcNAc...) asparagine glycosylation is found at N38, N70, N83, N143, and N156. C90 and C190 are disulfide-bonded. The tract at residues 198–230 (LKQSKEKPRSTSRSPSITQLTSTSPLPPPSHST) is disordered. Over residues 211–221 (SPSITQLTSTS) the composition is skewed to low complexity. Residue S227 is the site of GPI-anchor amidated serine attachment. Residues 228-253 (HSTSKKGFISVGLIFISLLFAFAFAM) constitute a propeptide, removed in mature form.

The protein belongs to the NKG2D ligand family. Glycosylated. In terms of tissue distribution, expressed predominantly in embryonic brain.

It localises to the cell membrane. Its function is as follows. Acts as a ligand for KLRK1. The protein is Retinoic acid early-inducible protein 1-gamma (Raet1c) of Mus musculus (Mouse).